The following is a 341-amino-acid chain: Hyaluronidase A (341 aa).

N-linked (GlcNAc...) asparagine glycans are attached at residues Asn-3, Asn-68, and Asn-83. 2 disulfides stabilise this stretch: Cys-23–Cys-311 and Cys-189–Cys-201.

The protein belongs to the glycosyl hydrolase 56 family. Expressed by the venom gland.

The protein localises to the secreted. It catalyses the reaction Random hydrolysis of (1-&gt;4)-linkages between N-acetyl-beta-D-glucosamine and D-glucuronate residues in hyaluronate.. Functionally, may hydrolyze high molecular weight hyaluronic acid to produce small oligosaccharides. The sequence is that of Hyaluronidase A from Vespa velutina (Asian yellow-legged hornet).